A 421-amino-acid chain; its full sequence is Imidazolonepropionase (421 aa).

Fe(3+) contacts are provided by histidine 81 and histidine 83. Histidine 81 and histidine 83 together coordinate Zn(2+). Positions 90, 153, and 186 each coordinate 4-imidazolone-5-propanoate. Tyrosine 153 is an N-formimidoyl-L-glutamate binding site. Residue histidine 251 participates in Fe(3+) binding. Position 251 (histidine 251) interacts with Zn(2+). Glutamate 254 is a binding site for 4-imidazolone-5-propanoate. Position 326 (aspartate 326) interacts with Fe(3+). Position 326 (aspartate 326) interacts with Zn(2+). Asparagine 328 and glycine 330 together coordinate N-formimidoyl-L-glutamate. Residue serine 331 coordinates 4-imidazolone-5-propanoate.

It belongs to the metallo-dependent hydrolases superfamily. HutI family. The cofactor is Zn(2+). Fe(3+) is required as a cofactor.

Its subcellular location is the cytoplasm. It catalyses the reaction 4-imidazolone-5-propanoate + H2O = N-formimidoyl-L-glutamate. It participates in amino-acid degradation; L-histidine degradation into L-glutamate; N-formimidoyl-L-glutamate from L-histidine: step 3/3. In terms of biological role, catalyzes the hydrolytic cleavage of the carbon-nitrogen bond in imidazolone-5-propanoate to yield N-formimidoyl-L-glutamate. It is the third step in the universal histidine degradation pathway. This is Imidazolonepropionase from Streptococcus pyogenes serotype M3 (strain SSI-1).